The sequence spans 265 residues: MRIGLFDSGIGGFTVLKKVIELCPNNSFIYLADTARLPYGVKTNNEIKKIAEEISSWFRYQNIDAFLVACNTTNAIALDVIKNNLDIPVFDLIGSAASNIQESRVGVLATPSTVRTKAYTNAILEFKPKTFVIEQPCPAFVPMIEMDNINSDDITDVATGYLQPLLKQKIHSLILGCSHYPLITSSLRKVLPSSVKLIDPAEALSFKLKFFIDSKTRNYSKNKNFVDLKFYVTSNLKNFSNKAKHWLDVFPEVNLVSLQKKGWVS.

Substrate contacts are provided by residues 7–8 and 39–40; these read DS and YG. The active-site Proton donor/acceptor is Cys-70. Position 71-72 (71-72) interacts with substrate; the sequence is NT. Residue Cys-177 is the Proton donor/acceptor of the active site.

This sequence belongs to the aspartate/glutamate racemases family.

The catalysed reaction is L-glutamate = D-glutamate. It participates in cell wall biogenesis; peptidoglycan biosynthesis. Its function is as follows. Provides the (R)-glutamate required for cell wall biosynthesis. This Prochlorococcus marinus (strain NATL1A) protein is Glutamate racemase.